The sequence spans 213 residues: Octanoyltransferase (213 aa).

Residues 27 to 209 enclose the BPL/LPL catalytic domain; sequence AATPDEVWLC…RLLAAMPEPA (183 aa). Substrate contacts are provided by residues 66–73, 140–142, and 153–155; these read RGGQVTYH, ALG, and GVA. The active-site Acyl-thioester intermediate is Cys-171.

This sequence belongs to the LipB family.

It is found in the cytoplasm. It catalyses the reaction octanoyl-[ACP] + L-lysyl-[protein] = N(6)-octanoyl-L-lysyl-[protein] + holo-[ACP] + H(+). The protein operates within protein modification; protein lipoylation via endogenous pathway; protein N(6)-(lipoyl)lysine from octanoyl-[acyl-carrier-protein]: step 1/2. In terms of biological role, catalyzes the transfer of endogenously produced octanoic acid from octanoyl-acyl-carrier-protein onto the lipoyl domains of lipoate-dependent enzymes. Lipoyl-ACP can also act as a substrate although octanoyl-ACP is likely to be the physiological substrate. The chain is Octanoyltransferase from Bordetella petrii (strain ATCC BAA-461 / DSM 12804 / CCUG 43448).